An 80-amino-acid chain; its full sequence is UPF0291 protein YlaC (80 aa).

The protein belongs to the UPF0291 family.

Its subcellular location is the cytoplasm. This Lactococcus lactis subsp. lactis (strain IL1403) (Streptococcus lactis) protein is UPF0291 protein YlaC (ylcA).